A 393-amino-acid polypeptide reads, in one-letter code: Acetate kinase (393 aa).

Mg(2+) is bound at residue asparagine 10. Lysine 17 is a binding site for ATP. Arginine 89 contacts substrate. Residue aspartate 146 is the Proton donor/acceptor of the active site. ATP-binding positions include 204–208 (HLGNG), 278–280 (DMR), and 323–327 (GVGEN). Glutamate 376 contributes to the Mg(2+) binding site.

The protein belongs to the acetokinase family. In terms of assembly, homodimer. The cofactor is Mg(2+). Mn(2+) serves as cofactor.

The protein localises to the cytoplasm. The enzyme catalyses acetate + ATP = acetyl phosphate + ADP. The protein operates within metabolic intermediate biosynthesis; acetyl-CoA biosynthesis; acetyl-CoA from acetate: step 1/2. Its function is as follows. Catalyzes the formation of acetyl phosphate from acetate and ATP. Can also catalyze the reverse reaction. This chain is Acetate kinase, found in Mycoplasma genitalium (strain ATCC 33530 / DSM 19775 / NCTC 10195 / G37) (Mycoplasmoides genitalium).